The sequence spans 276 residues: Undecaprenyl-diphosphatase 2 (276 aa).

The next 8 membrane-spanning stretches (helical) occupy residues 1 to 21, 44 to 64, 87 to 107, 114 to 134, 150 to 170, 190 to 210, 222 to 242, and 251 to 271; these read MSLWFLVFLSVLQGVTELFPV, QLLPFLVALHLGTAFALLWYF, GHLMWALIIGTIPAGLVGLLL, VFHDLRIVAVALIVNGILLWL, LTFKQAFFVGLAQVGALIPGF, AAEFSFLLGTPIIFAAGLLEL, DALLGGVLTAIAAYLSVRFLM, and LASFGLYCALAGLFCLGWFMF.

It belongs to the UppP family.

It is found in the cell inner membrane. The enzyme catalyses di-trans,octa-cis-undecaprenyl diphosphate + H2O = di-trans,octa-cis-undecaprenyl phosphate + phosphate + H(+). Its function is as follows. Catalyzes the dephosphorylation of undecaprenyl diphosphate (UPP). Confers resistance to bacitracin. In Burkholderia thailandensis (strain ATCC 700388 / DSM 13276 / CCUG 48851 / CIP 106301 / E264), this protein is Undecaprenyl-diphosphatase 2.